The primary structure comprises 311 residues: L-lactate dehydrogenase 2 (311 aa).

Residues Val14, Asp35, and Arg40 each contribute to the NAD(+) site. Arg90 serves as a coordination point for substrate. NAD(+) is bound by residues Ser103, 120 to 122 (ATN), and Thr145. 122 to 125 (NPCD) is a substrate binding site. Residue 150-153 (DTTR) participates in substrate binding. His177 serves as the catalytic Proton acceptor. Thr230 contributes to the substrate binding site.

Belongs to the LDH/MDH superfamily. LDH family. In terms of assembly, homotetramer.

Its subcellular location is the cytoplasm. It carries out the reaction (S)-lactate + NAD(+) = pyruvate + NADH + H(+). Its pathway is fermentation; pyruvate fermentation to lactate; (S)-lactate from pyruvate: step 1/1. Its function is as follows. Catalyzes the conversion of lactate to pyruvate. The chain is L-lactate dehydrogenase 2 from Listeria monocytogenes serotype 4b (strain F2365).